The following is a 228-amino-acid chain: 2,3-bisphosphoglycerate-dependent phosphoglycerate mutase (228 aa).

Residues 8–15 (RHGQSEWN), 21–22 (TG), Arg60, 87–90 (ERHY), Lys98, 114–115 (RR), and 183–184 (GN) contribute to the substrate site. The active-site Tele-phosphohistidine intermediate is the His9. Catalysis depends on Glu87, which acts as the Proton donor/acceptor.

Belongs to the phosphoglycerate mutase family. BPG-dependent PGAM subfamily.

It catalyses the reaction (2R)-2-phosphoglycerate = (2R)-3-phosphoglycerate. It functions in the pathway carbohydrate degradation; glycolysis; pyruvate from D-glyceraldehyde 3-phosphate: step 3/5. Its function is as follows. Catalyzes the interconversion of 2-phosphoglycerate and 3-phosphoglycerate. The sequence is that of 2,3-bisphosphoglycerate-dependent phosphoglycerate mutase from Staphylococcus aureus (strain MRSA252).